The following is a 159-amino-acid chain: Small ribosomal subunit protein uS7 (159 aa).

The protein belongs to the universal ribosomal protein uS7 family. As to quaternary structure, part of the 30S ribosomal subunit. Contacts proteins S9 and S11.

In terms of biological role, one of the primary rRNA binding proteins, it binds directly to 16S rRNA where it nucleates assembly of the head domain of the 30S subunit. Is located at the subunit interface close to the decoding center, probably blocks exit of the E-site tRNA. The protein is Small ribosomal subunit protein uS7 of Elusimicrobium minutum (strain Pei191).